A 236-amino-acid polypeptide reads, in one-letter code: 2-C-methyl-D-erythritol 4-phosphate cytidylyltransferase (236 aa).

The protein belongs to the IspD/TarI cytidylyltransferase family. IspD subfamily. In terms of assembly, homodimer.

The catalysed reaction is 2-C-methyl-D-erythritol 4-phosphate + CTP + H(+) = 4-CDP-2-C-methyl-D-erythritol + diphosphate. Its pathway is isoprenoid biosynthesis; isopentenyl diphosphate biosynthesis via DXP pathway; isopentenyl diphosphate from 1-deoxy-D-xylulose 5-phosphate: step 2/6. In terms of biological role, catalyzes the formation of 4-diphosphocytidyl-2-C-methyl-D-erythritol from CTP and 2-C-methyl-D-erythritol 4-phosphate (MEP). This Salmonella paratyphi A (strain ATCC 9150 / SARB42) protein is 2-C-methyl-D-erythritol 4-phosphate cytidylyltransferase.